The chain runs to 209 residues: MTEQFDTRRRLMAMFRNEMRMEKLENTIAKKSTKFHTNSAALMTTIDLQQRKFEKLNALITRRCEDINTRTAFTRAVREKLAEERQKNAEMQAQLEKANDERIEQMDCVRTLSDASNTFINPSALPARLKGVTVLREEGRWISLDYDGDDLKGLSTFWAQAHSGSASQKWQQLLSMDKAIMPTLNDKGNVNVSVSSIIEIDLTASPSHK.

Positions 74–107 (TRAVREKLAEERQKNAEMQAQLEKANDERIEQMD) form a coiled coil.

It belongs to the SPC25 family. Component of the Ndc80 complex, which is composed of Ndc80, Nuf2 and Spc25.

It localises to the nucleus. The protein resides in the chromosome. The protein localises to the centromere. It is found in the kinetochore. In terms of biological role, acts as a component of the essential kinetochore-associated Ndc80 complex, which is required for chromosome segregation and spindle checkpoint activity during meiosis and mitosis. Required for kinetochore integrity and the organization of stable microtubule binding sites in the outer plate of the kinetochore. Participates in SAC signaling that responds specifically to disruptions in spindle microtubule dynamics. The NDC80 complex synergistically enhances the affinity of the SKA1 complex for microtubules and may allow the NDC80 complex to track depolymerizing microtubules. This Drosophila grimshawi (Hawaiian fruit fly) protein is Kinetochore protein Spc25.